The sequence spans 2415 residues: Spectrin alpha chain (2415 aa).

Spectrin repeat units follow at residues 48-150 (RFQY…KLQQ), 154-254 (LVQF…QEKL), 258-362 (HEIQ…KLDE), 366-464 (LHRF…DRRI), 471-574 (DLQL…LLED), 577-679 (RYQQ…KLNE), 683-784 (QQQF…QHLL), 788-890 (QVQQ…QDLD), and 894-963 (QAHQ…RQQE). The SH3 domain occupies 970 to 1029 (TGKECVVALYDYTEKSPREVSMKKGDVLTLLNSNNKDWWKVEVNDRQGFVPAAYIKKIDA). 2 positions are modified to phosphoserine: Ser-1032 and Ser-1034. Spectrin repeat units follow at residues 1079-1177 (VREA…ASQL), 1181-1284 (HEVQ…EKLL), 1287-1391 (YDLQ…QLEQ), 1394-1496 (DLQL…SRLG), 1500-1604 (TLQQ…KLKE), 1608-1710 (QRTY…RLNE), 1714-1816 (LHQF…KLDE), 1820-1921 (YQQF…GALL), 1926-2028 (YLQF…DRLL), 2040-2141 (LYLT…DGEL), and 2154-2252 (LRKE…NLEQ). 2 consecutive EF-hand domains span residues 2265 to 2300 (DSLK…LGYD) and 2308 to 2343 (QPDP…KETE). Ca(2+) contacts are provided by Asp-2278, Asp-2280, Ser-2282, Lys-2284, Glu-2289, Asp-2321, Asn-2323, Asp-2325, Tyr-2327, and Glu-2332.

This sequence belongs to the spectrin family. In terms of assembly, native spectrin molecule is a tetramer composed of two antiparallel heterodimers joined head to head so that each end of the native molecule includes the C-terminus of the alpha subunit and the N-terminus of the beta subunit. Interacts with calmodulin in a calcium-dependent manner, interacts with F-actin and also interacts with Lva. Interacts with Ten-m. In terms of tissue distribution, a substantial pool of maternal protein in the egg undergoes dynamic changes in distribution early in embryogenesis. In gastrulated embryo, the highest level of protein is found in the respiratory tract cells and the lowest in parts of the forming gut.

It is found in the cytoplasm. The protein localises to the cytoskeleton. It localises to the golgi apparatus. Its subcellular location is the cell projection. The protein resides in the cilium. It is found in the flagellum. Spectrin is the major constituent of the cytoskeletal network underlying the erythrocyte plasma membrane. It associates with band 4.1 and actin to form the cytoskeletal superstructure of the erythrocyte plasma membrane. Essential for larval survival and development. Stabilizes cell to cell interactions that are critical for the maintenance of cell shape and subcellular organization within embryonic tissues. Lva and spectrin may form a Golgi-based scaffold that mediates interaction of Golgi bodies with microtubules and facilitates Golgi-derived membrane secretion required for the formation of furrows during cellularization. This chain is Spectrin alpha chain (alpha-Spec), found in Drosophila melanogaster (Fruit fly).